The following is a 276-amino-acid chain: Ammonia monooxygenase alpha subunit (276 aa).

A run of 5 helical transmembrane segments spans residues 29–49 (VYFPILIILLVGTYHMHFMLL), 66–86 (PVVTPIVGITYCSAIMYYLWV), 96–116 (LCVVCLLIGEWLTRYWGFYWW), 123–143 (FVTPGIMLPGALMLDFTLYLT), and 150–170 (ALVGGGFFGLLFYPGNWPIFG). Cu(+)-binding residues include Asp187, His191, and His204. The helical transmembrane segment at 219-239 (VIAAFFSAFVSMLMFTVWWYL) threads the bilayer.

In terms of assembly, the soluble ammonia monooxygenase is a nonamer composed of three alpha subunits (AmoA), three beta subunits (AmoB) and three gamma subunits (Cytochrome c1 PetC). The cofactor is Cu(+).

It localises to the cell membrane. It is found in the cytoplasm. It carries out the reaction AH2 + NH4(+) + O2 = hydroxylamine + A + H2O + H(+). With respect to regulation, in vitro, inhibited by acetylene. In fact, acetylene is oxidized to ketene which binds irreversibly to His-191 of ammonia monooxygenase alpha subunit (AmoA). Part of the ammonia monooxygenase complex, which catalyzes the oxidation of ammonia to hydroxylamine, the first reaction in the process of ammonia oxidation to nitrite. The protein is Ammonia monooxygenase alpha subunit of Nitrosomonas europaea (strain ATCC 19718 / CIP 103999 / KCTC 2705 / NBRC 14298).